Reading from the N-terminus, the 281-residue chain is Endochitinase At2g43610 (281 aa).

An N-terminal signal peptide occupies residues 1–28; it reads MATQNAILKKALIIFLFTLTIMTGTAFS. Positions 29 to 66 constitute a Chitin-binding type-1 domain; sequence QNCGTNGCKGNMCCSRWGYCGTTKAYCGTGCQSGPCNS. 4 disulfides stabilise this stretch: Cys31/Cys42, Cys36/Cys48, Cys41/Cys55, and Cys59/Cys64. The segment at 86–281 is catalytic; that stretch reads GTIASVITPA…GVTPGTNLSC (196 aa). Glu148 functions as the Proton donor in the catalytic mechanism. Asn278 carries N-linked (GlcNAc...) asparagine glycosylation.

This sequence belongs to the glycosyl hydrolase 19 family. Chitinase class I subfamily.

The enzyme catalyses Random endo-hydrolysis of N-acetyl-beta-D-glucosaminide (1-&gt;4)-beta-linkages in chitin and chitodextrins.. The sequence is that of Endochitinase At2g43610 from Arabidopsis thaliana (Mouse-ear cress).